Reading from the N-terminus, the 1528-residue chain is 5'-3' exoribonuclease 1 (1528 aa).

3 disordered regions span residues Ser1246–Glu1331, Pro1431–Asp1455, and Leu1470–Thr1528. A compositionally biased stretch (basic and acidic residues) spans Gln1274–Asp1304. Residues Ala1317–Ala1326 show a composition bias toward basic residues. The span at Ser1500–Ala1517 shows a compositional bias: polar residues. Thr1506 carries the post-translational modification Phosphothreonine. Ser1510 bears the Phosphoserine mark. Residues Ala1518–Thr1528 show a composition bias toward basic and acidic residues.

It belongs to the 5'-3' exonuclease family. Requires Mg(2+) as cofactor.

It localises to the cytoplasm. The protein resides in the perinuclear region. The protein localises to the P-body. Its activity is regulated as follows. 3'-phosphoadenosine 5'-phosphate (pAp) is an inhibitor of KEM1. Sodium-induced GCN4 expression reduces pAp accumulation by activating HAL2 expression, and therefore maintains mRNA degradation capacity which is likely to be important for the accurate and rapid adaptation of gene expression to salt stress. Its function is as follows. Multifunctional protein that exhibits several independent functions at different levels of the cellular processes. 5'-3' exonuclease component of the nonsense-mediated mRNA decay (NMD) which is a highly conserved mRNA degradation pathway, an RNA surveillance system whose role is to identify and rid cells of mRNA with premature termination codons and thus prevents accumulation of potentially harmful truncated proteins. The NMD pathway has a second role regulating the decay of wild-type mRNAs, and especially mRNAs that are important for telomere functions. Participate in CTH2-mediated and VTS1-mediated mRNA turnover. Involved in the degradation of several hypomodified mature tRNA species and participates in the 5'-processing or the degradation of the snoRNA precursors and rRNA processing. Involved in defense against virus and suppresses viral RNA recombination by rapidly removing the 5'-truncated RNAs, the substrates of recombination, and thus reducing the chance for recombination to occur in the parental strain. Required for the assembly of the virus-like particles of the Ty3 retrotransposon and contributes to the efficient generation of narnavirus 20S RNA by playing a major role in the elimination of the non-viral upstream sequences from the primary transcripts. Degrades single-stranded DNA (ss-DNA) and can renature complementary ss-DNA as well as catalyzes the formation of heteroduplex DNA from circular ss-DNA and homologous linear ds-DNA in vitro. Acts as a microtubule-associated protein which interacts with cytoplasmic microtubules through beta-tubulin and promotes in vitro assembly of tubulin into microtubules. Associates with microtubule functions such as chromosome transmission, nuclear migration, and SPB duplication. Has also a role in G1 to S transition and is involved in nuclear fusion during karyogamy. Required for the expression of ROK1 at the post-transcriptional level and for the alpha-factor induction of the karyogamy genes KAR3 and KAR4. Plays a role in filamentous growth. The sequence is that of 5'-3' exoribonuclease 1 (XRN1) from Saccharomyces cerevisiae (strain ATCC 204508 / S288c) (Baker's yeast).